We begin with the raw amino-acid sequence, 246 residues long: Probable transcriptional regulatory protein Teth39_1009 (246 aa).

Residues 1–21 (MSGHSKWANIKHKKEKMDAKK) are disordered.

This sequence belongs to the TACO1 family.

It is found in the cytoplasm. The chain is Probable transcriptional regulatory protein Teth39_1009 from Thermoanaerobacter pseudethanolicus (strain ATCC 33223 / 39E) (Clostridium thermohydrosulfuricum).